Consider the following 212-residue polypeptide: Bcl-2-related ovarian killer protein (212 aa).

Ser7 is subject to Phosphoserine. An interactions with ITPR1 region spans residues Met15–Arg45. Residues Lys25 and Lys32 each participate in a glycyl lysine isopeptide (Lys-Gly) (interchain with G-Cter in ubiquitin) cross-link. The short motif at Lys32 to Leu44 is the BH4 element. The BH3 motif lies at Val66–Pro82. The interval Leu70 to Glu78 is nuclear export signal. A BH1 motif is present at residues His112–Ala131. Glycyl lysine isopeptide (Lys-Gly) (interchain with G-Cter in ubiquitin) cross-links involve residues Lys159 and Lys176. Positions Trp164–Val178 match the BH2 motif. A helical membrane pass occupies residues Trp189–Leu209.

The protein belongs to the Bcl-2 family. As to quaternary structure, monomer; positively regulates apoptotic process. Homodimer. Heterodimer. Oligomer; promoted by apoptotic stimuli and BH3-only proteins; mediates constitutive activation. Interacts (via BH4 domain) with ITPR1; enhances BOK expression and stabilization; limits apoptosis and prevents ubiquitination and then degradation; protects ITPR1 from proteolysis by CASP3 during apoptosis. Interacts with ITPR2 and ITPR3; binds most strongly to ITPR2, and barely to ITPR3; regulates their expression. Interacts with XPO1; translocates to the cytoplasm. Interacts with BNIP3; promotes oligomerization. Post-translationally, ubiquitinated by AMFR/gp78 E3 ubiquitin ligase complex; mediates degradation by ubiquitin-proteasome pathway in a VCP/p97-dependent manner; prevents from pro-apoptotic activity; promotes degradation of newly synthesized proteins that are not ITPR1 associated. In terms of tissue distribution, expressed mainly in oocytes; weak expression in granulosa cells of the developing follicles. In adult human ovaries, expressed in granulosa cells at all follicular stages, but expression in primordial/primary follicles granulosa cell is stronger than in secondary and antral follicles.

It localises to the mitochondrion membrane. The protein resides in the endoplasmic reticulum membrane. The protein localises to the mitochondrion inner membrane. Its subcellular location is the cytoplasm. It is found in the nucleus. It localises to the mitochondrion. The protein resides in the endoplasmic reticulum. The protein localises to the mitochondrion outer membrane. Its subcellular location is the early endosome membrane. It is found in the recycling endosome membrane. It localises to the nucleus outer membrane. The protein resides in the golgi apparatus. The protein localises to the cis-Golgi network membrane. Its subcellular location is the trans-Golgi network membrane. It is found in the membrane. In terms of biological role, apoptosis regulator that functions through different apoptotic signaling pathways. Plays a roles as pro-apoptotic protein that positively regulates intrinsic apoptotic process in a BAX- and BAK1-dependent manner or in a BAX- and BAK1-independent manner. In response to endoplasmic reticulum stress promotes mitochondrial apoptosis through downstream BAX/BAK1 activation and positive regulation of PERK-mediated unfolded protein response. Activates apoptosis independently of heterodimerization with survival-promoting BCL2 and BCL2L1 through induction of mitochondrial outer membrane permeabilization, in a BAX- and BAK1-independent manner, in response to inhibition of ERAD-proteasome degradation system, resulting in cytochrome c release. In response to DNA damage, mediates intrinsic apoptotic process in a TP53-dependent manner. Plays a role in granulosa cell apoptosis by CASP3 activation. Plays a roles as anti-apoptotic protein during neuronal apoptotic process, by negatively regulating poly ADP-ribose polymerase-dependent cell death through regulation of neuronal calcium homeostasis and mitochondrial bioenergetics in response to NMDA excitation. In addition to its role in apoptosis, may regulate trophoblast cell proliferation during the early stages of placental development, by acting on G1/S transition through regulation of CCNE1 expression. May also play a role as an inducer of autophagy by disrupting interaction between MCL1 and BECN1. Its function is as follows. Pro-apoptotic molecule exerting its function through the mitochondrial pathway. This is Bcl-2-related ovarian killer protein from Homo sapiens (Human).